We begin with the raw amino-acid sequence, 563 residues long: uncharacterized protein (563 aa).

The segment at 30 to 303 is disordered; the sequence is QSIEIQPEEK…EKSPEKQVEI (274 aa). Over residues 36 to 56 the composition is skewed to basic and acidic residues; it reads PEEKPSEEKQPEEKSSEEKPK. Over residues 61–72 the composition is skewed to polar residues; the sequence is SAINSEKTQKPI. Basic and acidic residues-rich tracts occupy residues 101–115, 123–276, and 282–303; these read TTERPQPKTTMDDKQ, ERGR…EPRP, and EKSPDEHQEKHQEKSPEKQVEI.

It belongs to the mimivirus L41 family.

This is an uncharacterized protein from Acanthamoeba polyphaga (Amoeba).